The following is a 171-amino-acid chain: tRNA-specific adenosine deaminase (171 aa).

Residues 6–133 (EEQTYFMQEA…ERLNHRVQVE (128 aa)) form the CMP/dCMP-type deaminase domain. A Zn(2+)-binding site is contributed by histidine 57. Glutamate 59 serves as the catalytic Proton donor. Zn(2+) contacts are provided by cysteine 87 and cysteine 90.

This sequence belongs to the cytidine and deoxycytidylate deaminase family. In terms of assembly, homodimer. It depends on Zn(2+) as a cofactor.

The catalysed reaction is adenosine(34) in tRNA + H2O + H(+) = inosine(34) in tRNA + NH4(+). Its function is as follows. Catalyzes the deamination of adenosine to inosine at the wobble position 34 of tRNA(Arg2). This Streptococcus pyogenes serotype M3 (strain ATCC BAA-595 / MGAS315) protein is tRNA-specific adenosine deaminase.